Consider the following 244-residue polypeptide: Phosphoadenosine 5'-phosphosulfate reductase (244 aa).

Catalysis depends on Cys-239, which acts as the Nucleophile; cysteine thiosulfonate intermediate.

The protein belongs to the PAPS reductase family. CysH subfamily.

It is found in the cytoplasm. It catalyses the reaction [thioredoxin]-disulfide + sulfite + adenosine 3',5'-bisphosphate + 2 H(+) = [thioredoxin]-dithiol + 3'-phosphoadenylyl sulfate. The protein operates within sulfur metabolism; hydrogen sulfide biosynthesis; sulfite from sulfate: step 3/3. Catalyzes the formation of sulfite from phosphoadenosine 5'-phosphosulfate (PAPS) using thioredoxin as an electron donor. In Yersinia pseudotuberculosis serotype O:1b (strain IP 31758), this protein is Phosphoadenosine 5'-phosphosulfate reductase.